We begin with the raw amino-acid sequence, 150 residues long: Cytochrome c oxidase subunit 5A, mitochondrial (150 aa).

The transit peptide at 1-41 directs the protein to the mitochondrion; the sequence is MLGAALRRCAVAATTRAGPRGLLHSARTPGPAAAIQSVRCY. Positions 2 to 17 match the SIFI-degron motif; that stretch reads LGAALRRCAVAATTRA. Residues Lys-87 and Lys-113 each carry the N6-acetyllysine modification. Thr-141 carries the post-translational modification Phosphothreonine.

The protein belongs to the cytochrome c oxidase subunit 5A family. As to quaternary structure, component of the cytochrome c oxidase (complex IV, CIV), a multisubunit enzyme composed of 14 subunits. The complex is composed of a catalytic core of 3 subunits MT-CO1, MT-CO2 and MT-CO3, encoded in the mitochondrial DNA, and 11 supernumerary subunits COX4I, COX5A, COX5B, COX6A, COX6B, COX6C, COX7A, COX7B, COX7C, COX8 and NDUFA4, which are encoded in the nuclear genome. The complex exists as a monomer or a dimer and forms supercomplexes (SCs) in the inner mitochondrial membrane with NADH-ubiquinone oxidoreductase (complex I, CI) and ubiquinol-cytochrome c oxidoreductase (cytochrome b-c1 complex, complex III, CIII), resulting in different assemblies (supercomplex SCI(1)III(2)IV(1) and megacomplex MCI(2)III(2)IV(2)). Interacts with AFG1L. Interacts with RAB5IF. Post-translationally, in response to mitochondrial stress, the precursor protein is ubiquitinated by the SIFI complex in the cytoplasm before mitochondrial import, leading to its degradation. Within the SIFI complex, UBR4 initiates ubiquitin chain that are further elongated or branched by KCMF1.

Its subcellular location is the mitochondrion inner membrane. It participates in energy metabolism; oxidative phosphorylation. Its function is as follows. Component of the cytochrome c oxidase, the last enzyme in the mitochondrial electron transport chain which drives oxidative phosphorylation. The respiratory chain contains 3 multisubunit complexes succinate dehydrogenase (complex II, CII), ubiquinol-cytochrome c oxidoreductase (cytochrome b-c1 complex, complex III, CIII) and cytochrome c oxidase (complex IV, CIV), that cooperate to transfer electrons derived from NADH and succinate to molecular oxygen, creating an electrochemical gradient over the inner membrane that drives transmembrane transport and the ATP synthase. Cytochrome c oxidase is the component of the respiratory chain that catalyzes the reduction of oxygen to water. Electrons originating from reduced cytochrome c in the intermembrane space (IMS) are transferred via the dinuclear copper A center (CU(A)) of subunit 2 and heme A of subunit 1 to the active site in subunit 1, a binuclear center (BNC) formed by heme A3 and copper B (CU(B)). The BNC reduces molecular oxygen to 2 water molecules using 4 electrons from cytochrome c in the IMS and 4 protons from the mitochondrial matrix. In Gorilla gorilla gorilla (Western lowland gorilla), this protein is Cytochrome c oxidase subunit 5A, mitochondrial (COX5A).